A 1023-amino-acid polypeptide reads, in one-letter code: 2-oxoglutarate dehydrogenase complex component E1 (1023 aa).

The transit peptide at M1–Y40 directs the protein to the mitochondrion. Residue K74 is modified to N6-succinyllysine. Phosphoserine is present on S100. Ca(2+)-binding residues include H143, D156, and D158. Thiamine diphosphate is bound at residue R312. K401 bears the N6-acetyllysine mark. D411, N444, and I446 together coordinate thiamine diphosphate. Mg(2+) is bound by residues D411, N444, and I446. K534 participates in a covalent cross-link: Glycyl lysine isopeptide (Lys-Gly) (interchain with G-Cter in ubiquitin). K564 carries the N6-succinyllysine modification. Q676 is a thiamine diphosphate binding site. The recognized by alloreactive CD8 cytotoxic T-lymphocytes in association with a class I MHC protein stretch occupies residues L933–D939. K970 is modified (N6-acetyllysine).

The protein belongs to the alpha-ketoglutarate dehydrogenase family. In terms of assembly, homodimer. The 2-oxoglutarate dehydrogenase complex is composed of OGDH (2-oxoglutarate dehydrogenase; E1), DLST (dihydrolipoamide succinyltransferase; E2), DLD (dihydrolipoamide dehydrogenase; E3) and the assembly factor KGD4. It contains multiple copies of the three enzymatic components (E1, E2 and E3). In the nucleus, the 2-oxoglutarate dehydrogenase complex associates with KAT2A. Interacts with ABHD11; this interaction maintains the functional lipoylation of the 2-oxoglutarate dehydrogenase complex. It depends on thiamine diphosphate as a cofactor. Mg(2+) serves as cofactor.

It is found in the mitochondrion. It localises to the nucleus. The enzyme catalyses N(6)-[(R)-lipoyl]-L-lysyl-[protein] + 2-oxoglutarate + H(+) = N(6)-[(R)-S(8)-succinyldihydrolipoyl]-L-lysyl-[protein] + CO2. With respect to regulation, calcium ions and ADP stimulate, whereas ATP and NADH reduce catalytic activity. 2-oxoglutarate dehydrogenase (E1o) component of the 2-oxoglutarate dehydrogenase complex (OGDHC). Participates in the first step, rate limiting for the overall conversion of 2-oxoglutarate to succinyl-CoA and CO(2) catalyzed by the whole OGDHC. Catalyzes the irreversible decarboxylation of 2-oxoglutarate (alpha-ketoglutarate) via the thiamine diphosphate (ThDP) cofactor and subsequent transfer of the decarboxylated acyl intermediate on an oxidized dihydrolipoyl group that is covalently amidated to the E2 enzyme (dihydrolipoyllysine-residue succinyltransferase or DLST). Plays a key role in the Krebs (citric acid) cycle, which is a common pathway for oxidation of fuel molecules, including carbohydrates, fatty acids, and amino acids. Can catalyze the decarboxylation of 2-oxoadipate in vitro, but at a much lower rate than 2-oxoglutarate. Mainly active in the mitochondrion. A fraction of the 2-oxoglutarate dehydrogenase complex also localizes in the nucleus and is required for lysine succinylation of histones: associates with KAT2A on chromatin and provides succinyl-CoA to histone succinyltransferase KAT2A. This chain is 2-oxoglutarate dehydrogenase complex component E1, found in Mus musculus (Mouse).